The following is a 684-amino-acid chain: Soluble guanylate cyclase gcy-32 (684 aa).

H105 serves as a coordination point for heme. Positions 396-432 (DVEVNLQLEANNEQLETMTRELELERQKTDSILKDML) form a coiled coil. Positions 454–582 (TVMFCDLPAF…ETVTLASQME (129 aa)) constitute a Guanylate cyclase domain. Positions 459 and 503 each coordinate Mg(2+).

The protein belongs to the adenylyl cyclase class-4/guanylyl cyclase family. In terms of assembly, heterodimer; with other soluble guanylate cyclases. Heme is required as a cofactor. As to expression, expressed in a small number of neurons, corresponding to URX, AQR and PQR neurons.

It is found in the cytoplasm. The enzyme catalyses GTP = 3',5'-cyclic GMP + diphosphate. With respect to regulation, may be regulated by molecular oxygen. Probably not activated by nitric oxide (NO). In terms of biological role, synthesizes cyclic GMP (cGMP) from GTP. Influences aerotaxis responses, aggregation and bordering behaviors (gathering around the edge of a bacterial lawn) in combination with other soluble guanylate cyclases. The sequence is that of Soluble guanylate cyclase gcy-32 (gcy-32) from Caenorhabditis elegans.